The primary structure comprises 116 residues: MQITVMKGKIHRATVTDADLNYEGSLTVDMDLVDAAGMRVYEKVSVVNVNNGARFETYIIEGKRGSGEICLNGAAARLGMKGDKIIIITYAQVEEQELASDYTPKVVHVDEKNRKR.

Catalysis depends on S25, which acts as the Schiff-base intermediate with substrate; via pyruvic acid. At S25 the chain carries Pyruvic acid (Ser). T57 lines the substrate pocket. Y58 functions as the Proton donor in the catalytic mechanism. 73–75 (GAA) is a substrate binding site.

The protein belongs to the PanD family. As to quaternary structure, heterooctamer of four alpha and four beta subunits. It depends on pyruvate as a cofactor. Is synthesized initially as an inactive proenzyme, which is activated by self-cleavage at a specific serine bond to produce a beta-subunit with a hydroxyl group at its C-terminus and an alpha-subunit with a pyruvoyl group at its N-terminus.

The protein localises to the cytoplasm. It catalyses the reaction L-aspartate + H(+) = beta-alanine + CO2. It participates in cofactor biosynthesis; (R)-pantothenate biosynthesis; beta-alanine from L-aspartate: step 1/1. In terms of biological role, catalyzes the pyruvoyl-dependent decarboxylation of aspartate to produce beta-alanine. The protein is Aspartate 1-decarboxylase of Leptospira interrogans serogroup Icterohaemorrhagiae serovar Lai (strain 56601).